A 167-amino-acid polypeptide reads, in one-letter code: 3-isopropylmalate dehydratase small subunit (167 aa).

This sequence belongs to the LeuD family. LeuD type 2 subfamily. In terms of assembly, heterodimer of LeuC and LeuD.

It carries out the reaction (2R,3S)-3-isopropylmalate = (2S)-2-isopropylmalate. It participates in amino-acid biosynthesis; L-leucine biosynthesis; L-leucine from 3-methyl-2-oxobutanoate: step 2/4. Catalyzes the isomerization between 2-isopropylmalate and 3-isopropylmalate, via the formation of 2-isopropylmaleate. This is 3-isopropylmalate dehydratase small subunit from Sulfurimonas denitrificans (strain ATCC 33889 / DSM 1251) (Thiomicrospira denitrificans (strain ATCC 33889 / DSM 1251)).